The chain runs to 1705 residues: Homeobox-DDT domain protein RLT1 (1705 aa).

5 disordered regions span residues 1-53 (MEMG…QLET), 118-167 (ELPA…EYET), 237-267 (HDPR…TPNM), 296-322 (GPVP…MPSP), and 352-414 (GVRK…RKEE). The homeobox DNA-binding region spans 39–98 (VKPKRQMKTPFQLETLEKVYSEEKYPSEATRAELSEKLDLSDRQLQMWFCHRRLKDKKDG). Residues 136 to 159 (GSESGCSPYSNSRRNFASGSSSSR) are compositionally biased toward low complexity. Composition is skewed to polar residues over residues 253–265 (EQQS…SFTP) and 310–319 (RNCSTSQQDM). The DDT domain occupies 549 to 608 (DETVGNLLMVWRFLISFSDVLDLWPFTLDEFIQAFHDYDSRLLGEIHVTLLRSIIRDVED). Positions 731-800 (GTVKFAAFHV…APSTYCVRAP (70 aa)) constitute an HTH HARE-type domain. Disordered stretches follow at residues 1028–1053 (TRER…DLSN), 1198–1229 (VNHS…SIRV), 1441–1502 (PEDE…KAQS), 1561–1635 (PKSE…FVDY), and 1652–1705 (AIEE…SSDS). A compositionally biased stretch (low complexity) spans 1201 to 1220 (SPTDSVSPSSSAISGSNSDS). Residues 1455-1465 (SPFKGKGPREQ) are compositionally biased toward basic and acidic residues. Acidic residues-rich tracts occupy residues 1565-1574 (EVEEDEEEEE), 1611-1628 (VDDE…DEDG), and 1669-1684 (GEDD…DDDV).

As to quaternary structure, interacts with CHR11 and CHR17. Interacts (via the DDT domain) with CHR11 (via C-terminus). Highly expressed in growing tissues such as inflorescence and flower meristems, young leaves and floral organs. Expressed in roots, rosette and cauline leaves, stems, flowers, inflorescences and siliques.

The protein resides in the nucleus. Functionally, transcriptional regulator required for the maintenance of the plant vegetative phase. In association with CHR11 or CHR17 may prevent the early activation of the vegetative-to-reproductive transition by regulating key genes that contribute to flower timing, such as FT, SEP1, SEP3, AGL8/FUL, SOC1 and FLC. The chain is Homeobox-DDT domain protein RLT1 from Arabidopsis thaliana (Mouse-ear cress).